Reading from the N-terminus, the 178-residue chain is Transcription factor E (178 aa).

One can recognise an HTH TFE/IIEalpha-type domain in the interval 3–86; it reads AHEALAEIAG…YWRITDEPIQ (84 aa).

It belongs to the TFE family. Monomer. Interaction with RNA polymerase subunits RpoF and RpoE is necessary for Tfe stimulatory transcription activity. Able to interact with Tbp and RNA polymerase in the absence of DNA promoter. Interacts both with the preinitiation and elongation complexes.

In terms of biological role, transcription factor that plays a role in the activation of archaeal genes transcribed by RNA polymerase. Facilitates transcription initiation by enhancing TATA-box recognition by TATA-box-binding protein (Tbp), and transcription factor B (Tfb) and RNA polymerase recruitment. Not absolutely required for transcription in vitro, but particularly important in cases where Tbp or Tfb function is not optimal. It dynamically alters the nucleic acid-binding properties of RNA polymerases by stabilizing the initiation complex and destabilizing elongation complexes. Seems to translocate with the RNA polymerase following initiation and acts by binding to the non template strand of the transcription bubble in elongation complexes. The polypeptide is Transcription factor E (Thermofilum pendens (strain DSM 2475 / Hrk 5)).